A 237-amino-acid chain; its full sequence is MDKKKRILVKFSGEALAGDSGFGIDSTILKFIANEIKSLVDMGVEVGIVIGGGNIIRGVSAAAGGIIKRTSGDHMGMLATVINAIAMREALEFYDVDVRVQSAIKMEAICETFIIGRAKRHLEKGRVVIFAAGTGNPFFTTDTAATLRAIEIESDMIIKATKVNGVYDKDPNKFEEAVLLNSLTYDEALKDNIKVMDDTAIALAKDNHLPIVVCNMFKSGNLCKIADDDLSFCSIVK.

An ATP-binding site is contributed by 10–13 (KFSG). The involved in allosteric activation by GTP stretch occupies residues 18–23 (GDSGFG). Gly52 serves as a coordination point for UMP. ATP is bound by residues Gly53 and Arg57. UMP-binding positions include Asp73 and 134–141 (TGNPFFTT). ATP contacts are provided by Thr161, Tyr167, and Asp170.

Belongs to the UMP kinase family. As to quaternary structure, homohexamer.

It is found in the cytoplasm. It carries out the reaction UMP + ATP = UDP + ADP. Its pathway is pyrimidine metabolism; CTP biosynthesis via de novo pathway; UDP from UMP (UMPK route): step 1/1. Allosterically activated by GTP. Inhibited by UTP. In terms of biological role, catalyzes the reversible phosphorylation of UMP to UDP. In Campylobacter hominis (strain ATCC BAA-381 / DSM 21671 / CCUG 45161 / LMG 19568 / NCTC 13146 / CH001A), this protein is Uridylate kinase.